We begin with the raw amino-acid sequence, 78 residues long: Ubiquinol-cytochrome-c reductase complex assembly factor 3 (78 aa).

The Mitochondrial matrix portion of the chain corresponds to 1-5 (MSGMR). Residues 6-26 (ILTGSVALGGLTYAIWIIFSP) traverse the membrane as a helical segment. Over 27 to 78 (GEERKKEILKSLPEANPVRMEETRKRNAIMLQVLKDAAETNDNIARGFGSQK) the chain is Mitochondrial intermembrane.

The protein belongs to the UQCC3 family. In terms of assembly, associates with the ubiquinol-cytochrome c reductase complex (mitochondrial respiratory chain complex III or cytochrome b-c1 complex).

The protein localises to the mitochondrion inner membrane. Its function is as follows. Required for the assembly of the ubiquinol-cytochrome c reductase complex (mitochondrial respiratory chain complex III or cytochrome b-c1 complex), mediating cytochrome b recruitment and probably stabilization within the complex. Thereby, plays an important role in ATP production by mitochondria. Cardiolipin-binding protein, it may also control the cardiolipin composition of mitochondria membranes and their morphology. This chain is Ubiquinol-cytochrome-c reductase complex assembly factor 3, found in Danio rerio (Zebrafish).